A 327-amino-acid chain; its full sequence is Phenylalanine--tRNA ligase alpha subunit (327 aa).

Residue Glu-252 participates in Mg(2+) binding.

It belongs to the class-II aminoacyl-tRNA synthetase family. Phe-tRNA synthetase alpha subunit type 1 subfamily. In terms of assembly, tetramer of two alpha and two beta subunits. The cofactor is Mg(2+).

It is found in the cytoplasm. It catalyses the reaction tRNA(Phe) + L-phenylalanine + ATP = L-phenylalanyl-tRNA(Phe) + AMP + diphosphate + H(+). In Pectobacterium carotovorum subsp. carotovorum (strain PC1), this protein is Phenylalanine--tRNA ligase alpha subunit.